Consider the following 1264-residue polypeptide: MSGPSDETAGDLPVKDTGLNLFGVGGLQETSTARTVKTRQAVSRVSREELEDRFLRLHDENILLKQHARKQEDKIKRMATKLIRLVNDKKRYERVGGGPKRLGRDVEMEEMIEQLQEKVHELERQNEVLKNRLISAKQQLQVQGHRQTSYSRVQARVNTGRRRASASAGSQECPGKGLRFQNVDEAETVQPTLTKYSNSLLEEARGEIRNLENVIQSQRGQIEELEHLAEILKTQLKRKENEIELSLLQLREQQATDQRSNIRDNVETIKLHKQLVEKSNALSVIEGKFIQLQEKQRTLRISHDALMANGDELNKQLKEQRLKCCSLEKQLHSVRFSERRVEELQDRINDLEKERELLKENYDKLYNSAFSAAHEEQWKLKEQQMKVQIAQLETALKSDLTDKTEVLDKLKTERDQNEKLVQENRDLQLQCLQQKQRLHELQSRLKFFNQESDINADDLSEALLLIKAQKEQKNGDLSFLEKVDSKINKDLDRSMKELQATHAETVQELEKTRNMLIMQHKINKDYQMEVETVTQKMENLQQDYELKVEQYVHLLDIRAARIQKLEAQLKDIAYGTKQYKFKPEIMPDDSVDEFDETIHLERGENLFEIHINKVTFSSEVLRASGDKELVTFCTYAFYDFELQTTPIVRGLYPEYNFTSQYLVHVNDLFLQYIQKNTVTLELHQAHSTDYETIAACQLRFHEILEKSGRIFCTTSLVGTKGDIPNFGTVEYWFRLRVPMDQAIRLYRERAKALGYITSNFKKPEKMQLSSQQAATTAQISPAESTDGNLNELHVTVKCCTGLQSRASYLQPHAYVVYKFFDFPDHDTAIVPSSNDPQFDDHMCFPVPMNMDLDRYLKSESLSFYVFDDSDTQENIYMGKVNVPLISLAHDKCISGIFELMDKEKHAAGTIQVILKWKFTYLPPSGSITTEDLGKFVCREEPEAVQRLPPKSSDVTSVVAPKPKPRQRLTFVDKKVSFADTISHPSPETSPPPKDIKDSSPEVGPKPENGLSAVAYPSKESGVAKVEENVGEMQQGKEDDISFLSEGQLASGSVASSEDETEITEELEPEDEDRSASDSDDCIIPSSVSTNTKQPSEEIRIEIIALNLNDSQITREDTIQRLFIECRFYSLPAEETPMSLPKPQSGQWVYYNYSNVIYLDKENNPAVRDILKAILQRRELPHRSVRFTVVSDPPEDEQDLECEDIGVAHVDLADLFQKGRDIIEQDIDVLDARTDGGTIGKLKVTVEALHALRSVYEQNRKDLEA.

4 coiled-coil regions span residues 64–143 (LKQH…LQVQ), 196–268 (YSNS…NVET), 299–454 (LRIS…ESDI), and 488–555 (NKDL…VHLL). C2 domains lie at 577–714 (KQYK…FCTT) and 773–897 (AATT…SGIF). Disordered regions lie at residues 979–1018 (DTIS…YPSK) and 1047–1093 (QLAS…NTKQ). A compositionally biased stretch (acidic residues) spans 1056–1080 (SEDETEITEELEPEDEDRSASDSDD).

Belongs to the RPGRIP1 family. In terms of assembly, interacts with NPHP4 and NPHP1; NPHP1, NPHP4 and RPGRIP1L are proposed to form a functional NPHP1-4-8 module localized to cell-cell contacts and the ciliary transition zone; NPHP4 mediates the interaction between NPHP1 and RPGRIP1L. Interacts with IQCB1; the interaction likely requires additional interactors. Interacts with TBXA2R (via C-terminus), RPGR, NEK4. Interacts with NPHP4, INVS and DVL2; proposed to form a complex involved in DVL2 stabilization. Interacts with PSMD2. As to expression, ubiquitously expressed. Not found in heart and skin.

The protein localises to the cytoplasm. Its subcellular location is the cytoskeleton. The protein resides in the cilium basal body. It localises to the cilium axoneme. It is found in the microtubule organizing center. The protein localises to the centrosome. Its subcellular location is the cell junction. The protein resides in the tight junction. Negatively regulates signaling through the G-protein coupled thromboxane A2 receptor (TBXA2R). May be involved in mechanisms like programmed cell death, craniofacial development, patterning of the limbs, and formation of the left-right axis. Involved in the organization of apical junctions; the function is proposed to implicate a NPHP1-4-8 module. Does not seem to be strictly required for ciliogenesis. Involved in establishment of planar cell polarity such as in cochlear sensory epithelium and is proposed to implicate stabilization of disheveled proteins. Involved in regulation of proteasomal activity at the primary cilium probably implicating association with PSDM2. The chain is Protein fantom (Rpgrip1l) from Mus musculus (Mouse).